Reading from the N-terminus, the 862-residue chain is Squamosa promoter-binding-like protein 1 (862 aa).

Residues Lys55–Gly98 are disordered. Over residues Ala72–Gly87 the composition is skewed to polar residues. Residues Gly104–Val181 form an SBP-type zinc finger. 8 residues coordinate Zn(2+): Cys107, Cys112, Cys129, His132, Cys148, Cys151, His155, and Cys167. A Bipartite nuclear localization signal motif is present at residues Lys164–Lys180.

As to expression, ubiquitous.

Its subcellular location is the nucleus. In terms of biological role, trans-acting factor that binds specifically to the consensus nucleotide sequence 5'-TNCGTACAA-3'. The protein is Squamosa promoter-binding-like protein 1 (SPL1) of Oryza sativa subsp. japonica (Rice).